The sequence spans 449 residues: Elongation factor 1-alpha (449 aa).

Residues 5 to 230 (KVHINIVVIG…DQINEPKRPS (226 aa)) enclose the tr-type G domain. The segment at 14-21 (GHVDSGKS) is G1. A GTP-binding site is contributed by 14 to 21 (GHVDSGKS). N6,N6-dimethyllysine is present on Lys55. Positions 70–74 (GITID) are G2. Lys79 is subject to N6,N6,N6-trimethyllysine. A G3 region spans residues 91-94 (DAPG). GTP-binding positions include 91-95 (DAPGH) and 153-156 (NKMD). The tract at residues 153–156 (NKMD) is G4. Lys187 bears the N6,N6,N6-trimethyllysine mark. The interval 194–196 (SGF) is G5. N6-methyllysine is present on Lys261. 5-glutamyl glycerylphosphorylethanolamine is present on Glu289. Position 306 is an N6,N6,N6-trimethyllysine (Lys306). Glu362 carries the post-translational modification 5-glutamyl glycerylphosphorylethanolamine. Lys396 is modified (N6,N6,N6-trimethyllysine).

It belongs to the TRAFAC class translation factor GTPase superfamily. Classic translation factor GTPase family. EF-Tu/EF-1A subfamily.

It localises to the cytoplasm. Its function is as follows. This protein promotes the GTP-dependent binding of aminoacyl-tRNA to the A-site of ribosomes during protein biosynthesis. In Daucus carota (Wild carrot), this protein is Elongation factor 1-alpha.